The chain runs to 513 residues: ATP synthase subunit alpha (513 aa).

169–176 provides a ligand contact to ATP; the sequence is GDRQTGKT.

Belongs to the ATPase alpha/beta chains family. In terms of assembly, F-type ATPases have 2 components, CF(1) - the catalytic core - and CF(0) - the membrane proton channel. CF(1) has five subunits: alpha(3), beta(3), gamma(1), delta(1), epsilon(1). CF(0) has three main subunits: a(1), b(2) and c(9-12). The alpha and beta chains form an alternating ring which encloses part of the gamma chain. CF(1) is attached to CF(0) by a central stalk formed by the gamma and epsilon chains, while a peripheral stalk is formed by the delta and b chains.

It is found in the cell inner membrane. The enzyme catalyses ATP + H2O + 4 H(+)(in) = ADP + phosphate + 5 H(+)(out). In terms of biological role, produces ATP from ADP in the presence of a proton gradient across the membrane. The alpha chain is a regulatory subunit. This chain is ATP synthase subunit alpha, found in Salmonella arizonae (strain ATCC BAA-731 / CDC346-86 / RSK2980).